A 54-amino-acid polypeptide reads, in one-letter code: UPF0391 membrane protein Mfla_0947/Mfla_1091 (54 aa).

2 consecutive transmembrane segments (helical) span residues 6–26 and 30–50; these read VIFF…IAAG and IAKI…VAGI.

This sequence belongs to the UPF0391 family.

The protein resides in the cell membrane. The protein is UPF0391 membrane protein Mfla_0947/Mfla_1091 of Methylobacillus flagellatus (strain ATCC 51484 / DSM 6875 / VKM B-1610 / KT).